The following is a 185-amino-acid chain: Ribosome-recycling factor (185 aa).

The protein belongs to the RRF family.

The protein localises to the cytoplasm. Responsible for the release of ribosomes from messenger RNA at the termination of protein biosynthesis. May increase the efficiency of translation by recycling ribosomes from one round of translation to another. The polypeptide is Ribosome-recycling factor (Xylella fastidiosa (strain Temecula1 / ATCC 700964)).